The following is a 390-amino-acid chain: MSIQSLLDYISVIPDIRQQGKVKHKLSDILFLTVCAVIAGADEWQEIEDFGHERLEWLKKYGDFDNGIPVDDTIARVVSNIDSLAFEKIFIEWMQECHEITDGEIIAIDGKTIRGSFDKGKRKGAIHMVSAFSNENGVVLGQVKTEAKSNEITAIPELLNLLDLKKNLITIDAMGCQKDIASKIKDKKADYLLAVKGNQGKLHHAFEEKFPVNVFSNYKGDSFSTQEISHGRKETRLHIVSNVTPEFCDFEFEWKGLKKLCVALSFRQKKEDKSAEGVSIRYYISSKDMDAKEFAHAIRAHWLIEHSLHWVLDVKMNEDASRIRRGNAAEIISGIKKMALNLLRDCKDIKGGVKRKRKKVALNTCYIEEVLASCSELGFRTDKMKNLTQI.

Belongs to the transposase 11 family.

In Escherichia coli O157:H7, this protein is Putative transposase YncI (yncI).